A 425-amino-acid chain; its full sequence is Tumor necrosis factor receptor superfamily member 16 (425 aa).

The N-terminal stretch at 1-29 (MRRAGAACSAMDRLRLLLLLILGVSSGGA) is a signal peptide. Topologically, residues 30 to 253 (KETCSTGLYT…VTRGTTDNLI (224 aa)) are extracellular. 4 TNFR-Cys repeats span residues 32–65 (TCST…QTVC), 67–108 (PCLD…DAVC), 109–147 (RCAY…NTVC), and 149–189 (ECPE…DAEC). Disulfide bonds link Cys33-Cys44, Cys45-Cys58, Cys48-Cys65, Cys68-Cys84, Cys87-Cys100, Cys90-Cys108, Cys110-Cys123, Cys126-Cys139, Cys129-Cys147, Cys150-Cys165, Cys168-Cys181, and Cys171-Cys189. 2 N-linked (GlcNAc...) asparagine glycosylation sites follow: Asn61 and Asn71. The segment at 193–225 (PGRWIPRSTPPEGSDSTAPSTQEPEVPPEQDLV) is disordered. The segment covering 206-215 (SDSTAPSTQE) has biased composition (polar residues). The helical transmembrane segment at 254–274 (PVYCSILAAVVVGLVAYIAFK) threads the bilayer. At 275–425 (RWNSCKQNKQ…CSESTATSPV (151 aa)) the chain is on the cytoplasmic side. 2 stretches are compositionally biased toward polar residues: residues 282 to 292 (NKQGANSRPVN) and 306 to 327 (SGIS…TASG). Residues 282–332 (NKQGANSRPVNQTPPPEGEKLHSDSGISVDSQSLHDQQTHTQTASGQALKG) form a disordered region. At Ser312 the chain carries Phosphoserine. Positions 327 to 342 (GQALKGDGNLYSSLPL) are mediates interaction with KIDINS220. In terms of domain architecture, Death spans 354-419 (GDTWRHLAGE…DIVESLCSES (66 aa)).

As to quaternary structure, homodimer; disulfide-linked. Heterodimer with SORCS2. The extracellular domains of the heterodimer bind NGF. The cytoplasmic region of the heterodimer binds TRIO. NGF binding mediates dissociation of TRIO from the receptor complex. Interacts with RTN4R. Interacts with TRAF2, TRAF4 and TRAF6. Interacts with PTPN13 and RANBP9. Interacts through TRAF6 with SQSTM1 which bridges NGFR to NTRK1. Interacts with BEX1. Interacts with BEX3. Interacts with KIDINS220 and NTRK1. Can form a ternary complex with NTRK1 and KIDINS220 and this complex is affected by the expression levels of KIDINS220. An increase in KIDINS220 expression leads to a decreased association of NGFR and NTRK1. Interacts (via death domain) with RAB31. Interacts with NTRK2; may regulate the ligand specificity of the NTRK2 receptor. Interacts with LINGO1. Interacts with NRADD. Interacts with MAGED1; the interaction antagonizes the association NGFR:NTRK1. Interacts (via death domain) with ARHGDIA and RIPK2. Interacts with BFAR. In terms of processing, subject to intramembrane proteolytic cleavage by the gamma-secretase complex, giving rise to an intracellular fragment that is rapidly degraded via the proteasome. Post-translationally, N- and O-glycosylated. Phosphorylated on serine residues.

The protein localises to the cell membrane. Its subcellular location is the cytoplasm. The protein resides in the perikaryon. It is found in the cell projection. It localises to the growth cone. The protein localises to the dendritic spine. In terms of biological role, low affinity receptor which can bind to NGF, BDNF, NTF3, and NTF4. Forms a heterodimeric receptor with SORCS2 that binds the precursor forms of NGF, BDNF and NTF3 with high affinity, and has much lower affinity for mature NGF and BDNF. In response to proNGF binding, the heterodimeric receptor with SORCS2 activates a signaling cascade that leads to decreased Rac activity, reorganization of the actin cytoskeleton and neuronal growth cone collapse. Plays an important role in differentiation and survival of specific neuronal populations during development. Can mediate cell survival as well as cell death of neural cells. Plays a role in the inactivation of RHOA. Plays a role in the regulation of the translocation of GLUT4 to the cell surface in adipocytes and skeletal muscle cells in response to insulin, probably by regulating RAB31 activity, and thereby contributes to the regulation of insulin-dependent glucose uptake. Necessary for the circadian oscillation of the clock genes BMAL1, PER1, PER2 and NR1D1 in the suprachiasmatic nucleus (SCN) of the brain and in liver and of the genes involved in glucose and lipid metabolism in the liver. In Rattus norvegicus (Rat), this protein is Tumor necrosis factor receptor superfamily member 16 (Ngfr).